We begin with the raw amino-acid sequence, 1085 residues long: Carbamoyl phosphate synthase large chain (1085 aa).

The segment at 1 to 399 is carboxyphosphate synthetic domain; it reads MPKRTDISNI…ALQKALCSLE (399 aa). ATP is bound by residues arginine 127, arginine 167, glycine 174, glutamate 206, leucine 208, glutamate 213, glycine 239, valine 240, histidine 241, glutamine 283, and glutamate 297. The 196-residue stretch at 131-326 folds into the ATP-grasp 1 domain; that stretch reads KEAMLKIGMD…IAKVATMLAV (196 aa). Mg(2+) is bound by residues glutamine 283, glutamate 297, and asparagine 299. The Mn(2+) site is built by glutamine 283, glutamate 297, and asparagine 299. Residues 400-552 are oligomerization domain; sequence NNWLGFESLS…APNPLPPIEN (153 aa). A carbamoyl phosphate synthetic domain region spans residues 553–951; it reads KQEKKEKKIL…AFFKAQTACF (399 aa). In terms of domain architecture, ATP-grasp 2 spans 678–871; the sequence is SLFLKELDIK…LAKVATRVMV (194 aa). ATP is bound by residues arginine 714, lysine 756, leucine 758, glutamate 763, glycine 788, isoleucine 789, histidine 790, serine 791, glutamine 830, and glutamate 842. Positions 830, 842, and 844 each coordinate Mg(2+). Mn(2+) is bound by residues glutamine 830, glutamate 842, and asparagine 844. The MGS-like domain occupies 952–1085; sequence NPIKNKGLIF…ELLALQDYLK (134 aa). An allosteric domain region spans residues 952-1085; it reads NPIKNKGLIF…ELLALQDYLK (134 aa).

It belongs to the CarB family. As to quaternary structure, composed of two chains; the small (or glutamine) chain promotes the hydrolysis of glutamine to ammonia, which is used by the large (or ammonia) chain to synthesize carbamoyl phosphate. Tetramer of heterodimers (alpha,beta)4. Mg(2+) serves as cofactor. It depends on Mn(2+) as a cofactor.

It carries out the reaction hydrogencarbonate + L-glutamine + 2 ATP + H2O = carbamoyl phosphate + L-glutamate + 2 ADP + phosphate + 2 H(+). It catalyses the reaction hydrogencarbonate + NH4(+) + 2 ATP = carbamoyl phosphate + 2 ADP + phosphate + 2 H(+). The protein operates within amino-acid biosynthesis; L-arginine biosynthesis; carbamoyl phosphate from bicarbonate: step 1/1. It participates in pyrimidine metabolism; UMP biosynthesis via de novo pathway; (S)-dihydroorotate from bicarbonate: step 1/3. In terms of biological role, large subunit of the glutamine-dependent carbamoyl phosphate synthetase (CPSase). CPSase catalyzes the formation of carbamoyl phosphate from the ammonia moiety of glutamine, carbonate, and phosphate donated by ATP, constituting the first step of 2 biosynthetic pathways, one leading to arginine and/or urea and the other to pyrimidine nucleotides. The large subunit (synthetase) binds the substrates ammonia (free or transferred from glutamine from the small subunit), hydrogencarbonate and ATP and carries out an ATP-coupled ligase reaction, activating hydrogencarbonate by forming carboxy phosphate which reacts with ammonia to form carbamoyl phosphate. The chain is Carbamoyl phosphate synthase large chain from Helicobacter pylori (strain ATCC 700392 / 26695) (Campylobacter pylori).